The sequence spans 95 residues: Protein translocase subunit SecE (95 aa).

The interval 1–35 (MTDAVGSIDMPDAEDEAPESKKKSRKGGKRGKKGP) is disordered. Basic residues predominate over residues 22–35 (KKSRKGGKRGKKGP). Residues 67–87 (VVIVFVVVMIGLVTVLDIGFA) form a helical membrane-spanning segment.

The protein belongs to the SecE/SEC61-gamma family. As to quaternary structure, component of the Sec protein translocase complex. Heterotrimer consisting of SecY, SecE and SecG subunits. The heterotrimers can form oligomers, although 1 heterotrimer is thought to be able to translocate proteins. Interacts with the ribosome. Interacts with SecDF, and other proteins may be involved. Interacts with SecA.

The protein localises to the cell membrane. Functionally, essential subunit of the Sec protein translocation channel SecYEG. Clamps together the 2 halves of SecY. May contact the channel plug during translocation. This chain is Protein translocase subunit SecE, found in Streptomyces griseus.